The chain runs to 166 residues: RNA polymerase sigma factor SigV (166 aa).

The Polymerase core binding motif lies at 38–51 (DIVQESIKKALSSV). The H-T-H motif DNA-binding region spans 131–150 (LEEIAEITGENTNTVKTRLY).

The protein belongs to the sigma-70 factor family. ECF subfamily. Interacts with RsiV.

Functionally, sigma factors are initiation factors that promote the attachment of RNA polymerase to specific initiation sites and are then released. Positively regulates the expression of proteins involved in stress responses against bacitracin, paraquat and tellurite. The chain is RNA polymerase sigma factor SigV (sigV) from Bacillus subtilis (strain 168).